Here is a 445-residue protein sequence, read N- to C-terminus: tRNA modification GTPase MnmE (445 aa).

Residues Arg20, Glu79, and Lys119 each contribute to the (6S)-5-formyl-5,6,7,8-tetrahydrofolate site. Residues 215–371 (GLKLAIIGPP…ILKNIENIAE (157 aa)) enclose the TrmE-type G domain. Asn225 provides a ligand contact to K(+). Residues 225–230 (NTGKSS), 244–250 (SNIAGTT), and 269–272 (DTAG) each bind GTP. Residue Ser229 coordinates Mg(2+). Ser244, Ile246, and Thr249 together coordinate K(+). Thr250 contacts Mg(2+). Lys445 contacts (6S)-5-formyl-5,6,7,8-tetrahydrofolate.

Belongs to the TRAFAC class TrmE-Era-EngA-EngB-Septin-like GTPase superfamily. TrmE GTPase family. In terms of assembly, homodimer. Heterotetramer of two MnmE and two MnmG subunits. Requires K(+) as cofactor.

It localises to the cytoplasm. Functionally, exhibits a very high intrinsic GTPase hydrolysis rate. Involved in the addition of a carboxymethylaminomethyl (cmnm) group at the wobble position (U34) of certain tRNAs, forming tRNA-cmnm(5)s(2)U34. The polypeptide is tRNA modification GTPase MnmE (Rickettsia prowazekii (strain Madrid E)).